The chain runs to 900 residues: Translation initiation factor IF-2 (900 aa).

Disordered regions lie at residues G30–K77 and N89–M291. Positions N89–T112 are enriched in low complexity. Residues P113–P129 show a composition bias toward pro residues. Residues P175 to A187 are compositionally biased toward low complexity. A compositionally biased stretch (gly residues) spans G215–G271. The segment covering R275–K284 has biased composition (basic residues). A tr-type G domain is found at V396–L567. Positions G405–T412 are G1. G405–T412 is a binding site for GTP. Residues G430–H434 form a G2 region. The segment at D455–G458 is G3. Residues D455 to H459 and N509 to D512 contribute to the GTP site. Residues N509–D512 form a G4 region. Residues S545–K547 are G5.

It belongs to the TRAFAC class translation factor GTPase superfamily. Classic translation factor GTPase family. IF-2 subfamily.

Its subcellular location is the cytoplasm. One of the essential components for the initiation of protein synthesis. Protects formylmethionyl-tRNA from spontaneous hydrolysis and promotes its binding to the 30S ribosomal subunits. Also involved in the hydrolysis of GTP during the formation of the 70S ribosomal complex. In Mycobacterium bovis (strain BCG / Pasteur 1173P2), this protein is Translation initiation factor IF-2.